The primary structure comprises 169 residues: Der GTPase-activating protein YihI (169 aa).

Disordered stretches follow at residues 1 to 75 and 144 to 169; these read MKPS…IPLG and GLSYDDDEEEEEDEKQEDMMRLLRGN. Residues 10–19 show a composition bias toward basic residues; it reads SKGHAKARRK. Residues 20-30 show a composition bias toward basic and acidic residues; sequence TREELDQEARD. Positions 31–40 are enriched in basic residues; sequence RKRQKKRRGH. Residues 49-58 show a composition bias toward polar residues; the sequence is GNTTSGSKGQ. Residues 147–159 show a composition bias toward acidic residues; it reads YDDDEEEEEDEKQ. Over residues 160-169 the composition is skewed to basic and acidic residues; that stretch reads EDMMRLLRGN.

It belongs to the YihI family. In terms of assembly, interacts with Der.

A GTPase-activating protein (GAP) that modifies Der/EngA GTPase function. May play a role in ribosome biogenesis. The sequence is that of Der GTPase-activating protein YihI from Escherichia coli (strain 55989 / EAEC).